The primary structure comprises 1458 residues: GTPase-activating protein and VPS9 domain-containing protein 1 (1458 aa).

Residues 147–385 (SYLLQVLRYL…AAFLDVVIGG (239 aa)) enclose the Ras-GAP domain. Ser-227 is subject to Phosphoserine. Phosphothreonine is present on residues Thr-390 and Thr-458. Residues 447-475 (AKPGKSSSLDMTPYSTPQMSPATTPANKK) are disordered. Residues 451 to 473 (KSSSLDMTPYSTPQMSPATTPAN) are compositionally biased toward polar residues. Tyr-460 is modified (phosphotyrosine). Ser-466 carries the phosphoserine modification. At Thr-470 the chain carries Phosphothreonine. 2 positions are modified to phosphoserine: Ser-566 and Ser-569. Disordered stretches follow at residues 574–608 (GISE…GSNG), 738–821 (LESC…PSQS), and 846–867 (HYAR…VGGN). Residues 578 to 588 (GPSNRSNSVSS) are compositionally biased toward polar residues. 3 positions are modified to phosphoserine: Ser-742, Ser-746, and Ser-757. Residues 758-777 (SRPSTPGLSVVSGISATSED) are compositionally biased toward polar residues. Thr-762 carries the phosphothreonine modification. Ser-766 is modified (phosphoserine). Over residues 778 to 789 (IPNKIEDLRSEC) the composition is skewed to basic and acidic residues. Residues Ser-876, Ser-902, Ser-903, Ser-908, and Ser-914 each carry the phosphoserine modification. Residues 888-902 (KQRHSYPERLVRSRS) are compositionally biased toward basic and acidic residues. Disordered stretches follow at residues 888–1022 (KQRH…RLSA) and 1039–1072 (KRTS…EEAL). Residues 930–951 (AAATGATSLVAAPHSSSSSPSK) are compositionally biased toward low complexity. Composition is skewed to basic and acidic residues over residues 952–973 (DSSR…DRSR) and 995–1006 (EKQEKDKDDLGP). At Ser-964 the chain carries Phosphoserine. Residues 1010 to 1022 (STLTDEPSPRLSA) show a composition bias toward polar residues. 2 positions are modified to phosphoserine: Ser-1017 and Ser-1044. The segment covering 1061–1071 (ESAHDSPREEA) has biased composition (basic and acidic residues). 2 positions are modified to phosphoserine: Ser-1076 and Ser-1083. The VPS9 domain occupies 1318–1458 (ILRDQVLHEH…EFIKTIDDRK (141 aa)).

This sequence belongs to the GAPVD1 family. In terms of assembly, interacts with RAB5A. Interacts with TRIP10/CIP4. Present in adipocytes and fibroblasts (at protein level). Ubiquitously expressed.

Its subcellular location is the membrane. It is found in the endosome. Acts both as a GTPase-activating protein (GAP) and a guanine nucleotide exchange factor (GEF), and participates in various processes such as endocytosis, insulin receptor internalization or LC2A4/GLUT4 trafficking. Acts as a GEF for the Ras-related protein RAB31 by exchanging bound GDP for free GTP, leading to regulate LC2A4/GLUT4 trafficking. In the absence of insulin, it maintains RAB31 in an active state and promotes a futile cycle between LC2A4/GLUT4 storage vesicles and early endosomes, retaining LC2A4/GLUT4 inside the cells. Upon insulin stimulation, it is translocated to the plasma membrane, releasing LC2A4/GLUT4 from intracellular storage vesicles. Also involved in EGFR trafficking and degradation, possibly by promoting EGFR ubiquitination and subsequent degradation by the proteasome. Has GEF activity for Rab5 and GAP activity for Ras. The chain is GTPase-activating protein and VPS9 domain-containing protein 1 (Gapvd1) from Mus musculus (Mouse).